Here is a 908-residue protein sequence, read N- to C-terminus: 26S proteasome non-ATPase regulatory subunit 2 (908 aa).

The residue at position 1 (Met-1) is an N-acetylmethionine. The interval 1-51 is disordered; it reads MEEGGRDKTPVQSQQPSATTPSGADEKSSGKERRDAGEKDKEQELSEEDKQ. Phosphothreonine occurs at positions 9 and 20. Residues 10-22 are compositionally biased toward polar residues; sequence PVQSQQPSATTPS. Residues 24-51 are compositionally biased toward basic and acidic residues; that stretch reads ADEKSSGKERRDAGEKDKEQELSEEDKQ. Ser-29 and Ser-147 each carry phosphoserine. At Tyr-194 the chain carries Phosphotyrosine. Residues Ser-361 and Ser-363 each carry the phosphoserine modification. PC repeat units lie at residues 409 to 442, 443 to 479, 480 to 514, 517 to 551, and 560 to 589; these read SAAASLGMILLWDVDGGLTQIDKYLYSSEDYIKS, GALLACGIVNSGVRNECDPALALLSDYVLHNSNTMRL, GSIFGLGLAYAGSNREDVLTLLLPVMGDSKSSMEV, VTALACGMIAVGSCNGDVTSTILQTIMEKSETELK, and LGLGLNHLGKGEAIEAILAALEVVSEPFRS. Lys-551 carries the post-translational modification N6-acetyllysine. The span at 623–643 shows a compositional bias: basic and acidic residues; it reads KEKEEDKDKKEKKDKDKKEAP. The segment at 623–645 is disordered; sequence KEKEEDKDKKEKKDKDKKEAPAD. 2 PC repeats span residues 692–723 and 742–757; these read LALALISVSNPRLNILDTLSKFSHDADPEVSY and AAMLRQLAQYHAKDPN. A required for interaction with UBLCP1 region spans residues 708-903; it reads DTLSKFSHDA…LEGFVILRKN (196 aa).

The protein belongs to the proteasome subunit S2 family. As to quaternary structure, component of the 19S proteasome regulatory particle complex. The 26S proteasome consists of a 20S core particle (CP) and two 19S regulatory subunits (RP). The regulatory particle is made of a lid composed of 9 subunits, a base containing 6 ATPases and few additional components including PSMD2. Interacts with RPGRIP1L. Interacts with CRY1 in a KDM8-dependent manner. Interacts (via C-terminus) with phosphatase UBLCP1 (via ubiquitin-like domain); the interaction recruits UBLCP1 to the 19S regulatory particle where it dephosphorylates 19S subunit PSMC2/RPT1 which impairs PSMC2 ATPase activity and disrupts 26S proteasome assembly.

Its function is as follows. Component of the 26S proteasome, a multiprotein complex involved in the ATP-dependent degradation of ubiquitinated proteins. This complex plays a key role in the maintenance of protein homeostasis by removing misfolded or damaged proteins, which could impair cellular functions, and by removing proteins whose functions are no longer required. Therefore, the proteasome participates in numerous cellular processes, including cell cycle progression, apoptosis, or DNA damage repair. Functionally, binds to the intracellular domain of tumor necrosis factor type 1 receptor. The binding domain of TRAP1 and TRAP2 resides outside the death domain of TNFR1. This Mus musculus (Mouse) protein is 26S proteasome non-ATPase regulatory subunit 2 (Psmd2).